The following is a 475-amino-acid chain: tRNA-2-methylthio-N(6)-dimethylallyladenosine synthase (475 aa).

A compositionally biased stretch (basic and acidic residues) spans 1 to 10 (MQETTVKRDG). The segment at 1 to 22 (MQETTVKRDGASPSDAGTPATT) is disordered. The 118-residue stretch at 27-144 (GKLYIRTFGC…LPDLIKRRRA (118 aa)) folds into the MTTase N-terminal domain. [4Fe-4S] cluster-binding residues include Cys-36, Cys-73, Cys-107, Cys-181, Cys-185, and Cys-188. Residues 167–400 (RVDGATAFVS…QALINQQAAA (234 aa)) form the Radical SAM core domain. A TRAM domain is found at 403 to 466 (QGMIGTRQRV…TNSLRGRVAG (64 aa)).

The protein belongs to the methylthiotransferase family. MiaB subfamily. In terms of assembly, monomer. [4Fe-4S] cluster serves as cofactor.

Its subcellular location is the cytoplasm. It catalyses the reaction N(6)-dimethylallyladenosine(37) in tRNA + (sulfur carrier)-SH + AH2 + 2 S-adenosyl-L-methionine = 2-methylsulfanyl-N(6)-dimethylallyladenosine(37) in tRNA + (sulfur carrier)-H + 5'-deoxyadenosine + L-methionine + A + S-adenosyl-L-homocysteine + 2 H(+). In terms of biological role, catalyzes the methylthiolation of N6-(dimethylallyl)adenosine (i(6)A), leading to the formation of 2-methylthio-N6-(dimethylallyl)adenosine (ms(2)i(6)A) at position 37 in tRNAs that read codons beginning with uridine. The protein is tRNA-2-methylthio-N(6)-dimethylallyladenosine synthase of Bordetella bronchiseptica (strain ATCC BAA-588 / NCTC 13252 / RB50) (Alcaligenes bronchisepticus).